The chain runs to 151 residues: Transcriptional repressor NrdR (151 aa).

The segment at 3-34 (CPYCGYGESKVVDSRATDDKMAIRRRRECLKC) is a zinc-finger region. Residues 49–139 (LLVIKKNMSR…VYRQFKDINT (91 aa)) form the ATP-cone domain.

Belongs to the NrdR family. Zn(2+) is required as a cofactor.

Functionally, negatively regulates transcription of bacterial ribonucleotide reductase nrd genes and operons by binding to NrdR-boxes. The chain is Transcriptional repressor NrdR from Clostridium kluyveri (strain NBRC 12016).